Reading from the N-terminus, the 291-residue chain is Bifunctional protein FolD (291 aa).

NADP(+) is bound by residues 167–169 (GRS) and Ser192.

The protein belongs to the tetrahydrofolate dehydrogenase/cyclohydrolase family. As to quaternary structure, homodimer.

The catalysed reaction is (6R)-5,10-methylene-5,6,7,8-tetrahydrofolate + NADP(+) = (6R)-5,10-methenyltetrahydrofolate + NADPH. The enzyme catalyses (6R)-5,10-methenyltetrahydrofolate + H2O = (6R)-10-formyltetrahydrofolate + H(+). Its pathway is one-carbon metabolism; tetrahydrofolate interconversion. In terms of biological role, catalyzes the oxidation of 5,10-methylenetetrahydrofolate to 5,10-methenyltetrahydrofolate and then the hydrolysis of 5,10-methenyltetrahydrofolate to 10-formyltetrahydrofolate. The polypeptide is Bifunctional protein FolD (Leptospira biflexa serovar Patoc (strain Patoc 1 / Ames)).